The primary structure comprises 406 residues: S-adenosylmethionine synthase (406 aa).

Position 17 (histidine 17) interacts with ATP. Aspartate 19 lines the Mg(2+) pocket. Glutamate 45 is a K(+) binding site. Positions 58 and 101 each coordinate L-methionine. A flexible loop region spans residues 101–111 (QSAEINQGVAR). ATP is bound by residues 178-180 (DGK), aspartate 258, 264-265 (RK), alanine 281, and lysine 285. Aspartate 258 contacts L-methionine. Lysine 289 is a binding site for L-methionine.

This sequence belongs to the AdoMet synthase family. In terms of assembly, homotetramer; dimer of dimers. Mg(2+) is required as a cofactor. It depends on K(+) as a cofactor.

The protein resides in the cytoplasm. The catalysed reaction is L-methionine + ATP + H2O = S-adenosyl-L-methionine + phosphate + diphosphate. The protein operates within amino-acid biosynthesis; S-adenosyl-L-methionine biosynthesis; S-adenosyl-L-methionine from L-methionine: step 1/1. In terms of biological role, catalyzes the formation of S-adenosylmethionine (AdoMet) from methionine and ATP. The overall synthetic reaction is composed of two sequential steps, AdoMet formation and the subsequent tripolyphosphate hydrolysis which occurs prior to release of AdoMet from the enzyme. In Bifidobacterium longum subsp. infantis (strain ATCC 15697 / DSM 20088 / JCM 1222 / NCTC 11817 / S12), this protein is S-adenosylmethionine synthase.